The chain runs to 488 residues: Spermatogenesis-associated protein 6 (488 aa).

The N-terminal stretch at 1–17 is a signal peptide; that stretch reads MPKVKALQCALALEIRS. The segment at 175–225 is disordered; the sequence is PHGRLQCRTSRSQKKKSKSPERSKYCINTKNYEQPTISSKSHSPSPYTKRR. Residues 200 to 220 show a composition bias toward polar residues; sequence CINTKNYEQPTISSKSHSPSP. Serine 217 and serine 219 each carry phosphoserine. A Glycyl lysine isopeptide (Lys-Gly) (interchain with G-Cter in SUMO2) cross-link involves residue lysine 248. Residues serine 265, serine 274, serine 325, serine 343, serine 346, serine 354, serine 424, serine 465, and serine 487 each carry the phosphoserine modification.

Belongs to the SPATA6 family. Interacts with MYL6. As to expression, testis-specific, in spermatocytes.

It localises to the secreted. The protein resides in the cell projection. The protein localises to the cilium. It is found in the flagellum. In terms of biological role, required for formation of the sperm connecting piece during spermiogenesis. Sperm connecting piece is essential for linking the developing flagellum to the head during late spermiogenesis. May be involved in myosin-based microfilament transport through interaction with myosin subunits. This chain is Spermatogenesis-associated protein 6 (Spata6), found in Rattus norvegicus (Rat).